The following is a 552-amino-acid chain: Hyaluronan synthase 2 (552 aa).

Residues 1-11 (MHCERFLCVLR) lie on the Cytoplasmic side of the membrane. A helical membrane pass occupies residues 12–32 (IIGTTLFGVSLLLGITAAYIV). Topologically, residues 33 to 45 (GYQFIQTDNYYFS) are extracellular. A helical membrane pass occupies residues 46–66 (FGLYGAFLASHLIIQSLFAFL). Residues 67 to 374 (EHRKMKKSLE…NAMWFHKHHL (308 aa)) are Cytoplasmic-facing. Position 110 is a phosphothreonine (threonine 110). Lysine 190 is covalently cross-linked (Glycyl lysine isopeptide (Lys-Gly) (interchain with G-Cter in ubiquitin)). Residue serine 221 is glycosylated (O-linked (GlcNAc) serine). Phosphothreonine is present on threonine 328. Residues 375-395 (WMTYEAVITGFFPFFLIATVI) traverse the membrane as a helical segment. The Extracellular segment spans residues 396–402 (QLFYRGK). The helical transmembrane segment at 403–423 (IWNILLFLLTVQLVGLIKSSF) threads the bilayer. At 424 to 429 (ASCLRG) the chain is on the cytoplasmic side. The helical transmembrane segment at 430–450 (NIVMVFMSLYSVLYMSSLLPA) threads the bilayer. The Extracellular portion of the chain corresponds to 451–475 (KMFAIATINKAGWGTSGRKTIVVNF). A helical transmembrane segment spans residues 476-496 (IGLIPVSVWFTILLGGVIFTI). Topologically, residues 497–510 (YKESKKPFSESKQT) are cytoplasmic. The helical transmembrane segment at 511-531 (VLIVGTLIYACYWVMLLTLYV) threads the bilayer. The Extracellular portion of the chain corresponds to 532–552 (VLINKCGRRKKGQQYDMVLDV).

This sequence belongs to the NodC/HAS family. Homodimer; dimerization promotes enzymatic activity. Forms heterodimer with HAS3. Forms heterodimer with HAS1. Mg(2+) serves as cofactor. Phosphorylation at Thr-328 is essential for hyaluronan synthase activity. Post-translationally, O-GlcNAcylation at Ser-221 increases the stability of HAS2 and plasma membrane localization. In terms of processing, ubiquitination at Lys-190; this ubiquitination is essential for hyaluronan synthase activity and homo- or hetero-oligomerization. Can also be poly-ubiquitinated. Deubiquitinated by USP17L22/USP17 and USP4. USP17L22/USP17 efficiently removes 'Lys-63'- and 'Lys-48'-linked polyubiquitin chains, whereas USP4 preferentially removes monoubiquitination and, partially, both 'Lys-63'- and 'Lys-48'-linked polyubiquitin chain. Expressed in heart, brain, spleen, lung and skeletal muscle.

It localises to the cell membrane. Its subcellular location is the endoplasmic reticulum membrane. It is found in the vesicle. The protein resides in the golgi apparatus membrane. The protein localises to the lysosome. The enzyme catalyses [hyaluronan](n) + UDP-N-acetyl-alpha-D-glucosamine = N-acetyl-beta-D-glucosaminyl-(1-&gt;4)-[hyaluronan](n) + UDP + H(+). It carries out the reaction N-acetyl-beta-D-glucosaminyl-(1-&gt;4)-[hyaluronan](n) + UDP-alpha-D-glucuronate = [hyaluronan](n+1) + UDP + H(+). It functions in the pathway glycan biosynthesis; hyaluronan biosynthesis. Its function is as follows. Catalyzes the addition of GlcNAc or GlcUA monosaccharides to the nascent hyaluronan polymer. Therefore, it is essential to hyaluronan synthesis a major component of most extracellular matrices that has a structural role in tissues architectures and regulates cell adhesion, migration and differentiation. This is one of the isozymes catalyzing that reaction and it is particularly responsible for the synthesis of high molecular mass hyaluronan. Required for the transition of endocardial cushion cells into mesenchymal cells, a process crucial for heart development. May also play a role in vasculogenesis. High molecular mass hyaluronan also play a role in early contact inhibition a process which stops cell growth when cells come into contact with each other or the extracellular matrix. Catalyzes the addition of GlcNAc or GlcUA monosaccharides to the nascent hyaluronan polymer. Therefore, it is essential to hyaluronan synthesis a major component of most extracellular matrices that has a structural role in tissues architectures and regulates cell adhesion, migration and differentiation. This is one of three isoenzymes responsible for cellular hyaluronan synthesis and it is particularly responsible for the synthesis of high molecular mass hyaluronan. The sequence is that of Hyaluronan synthase 2 from Mus musculus (Mouse).